Consider the following 337-residue polypeptide: Glyceraldehyde-3-phosphate dehydrogenase (337 aa).

Residues 12-13 (RI), D34, and K79 each bind NAD(+). Residues 150 to 152 (SCT), T181, 210 to 211 (TG), and R233 contribute to the D-glyceraldehyde 3-phosphate site. The Nucleophile role is filled by C151. NAD(+) is bound at residue N315.

This sequence belongs to the glyceraldehyde-3-phosphate dehydrogenase family. As to quaternary structure, homotetramer.

It localises to the cytoplasm. The catalysed reaction is D-glyceraldehyde 3-phosphate + phosphate + NAD(+) = (2R)-3-phospho-glyceroyl phosphate + NADH + H(+). Its pathway is carbohydrate degradation; glycolysis; pyruvate from D-glyceraldehyde 3-phosphate: step 1/5. This chain is Glyceraldehyde-3-phosphate dehydrogenase (GPD1), found in Phaeosphaeria nodorum (strain SN15 / ATCC MYA-4574 / FGSC 10173) (Glume blotch fungus).